The following is a 590-amino-acid chain: Probable metalloendopeptidase G1-type (590 aa).

Residue histidine 41 participates in Zn(2+) binding. Residue glutamate 44 is part of the active site. Histidine 45 serves as a coordination point for Zn(2+).

This sequence belongs to the peptidase M44 family. Zn(2+) serves as cofactor.

Seems to be involved in viral proteins maturation by cleavage at Ala-Gly-|-Xaa motifs. In Oryctolagus cuniculus (Rabbit), this protein is Probable metalloendopeptidase G1-type (GP045L).